A 252-amino-acid chain; its full sequence is Imidazole glycerol phosphate synthase subunit HisF (252 aa).

Catalysis depends on residues Asp-11 and Asp-130.

The protein belongs to the HisA/HisF family. In terms of assembly, heterodimer of HisH and HisF.

The protein resides in the cytoplasm. It carries out the reaction 5-[(5-phospho-1-deoxy-D-ribulos-1-ylimino)methylamino]-1-(5-phospho-beta-D-ribosyl)imidazole-4-carboxamide + L-glutamine = D-erythro-1-(imidazol-4-yl)glycerol 3-phosphate + 5-amino-1-(5-phospho-beta-D-ribosyl)imidazole-4-carboxamide + L-glutamate + H(+). It participates in amino-acid biosynthesis; L-histidine biosynthesis; L-histidine from 5-phospho-alpha-D-ribose 1-diphosphate: step 5/9. Functionally, IGPS catalyzes the conversion of PRFAR and glutamine to IGP, AICAR and glutamate. The HisF subunit catalyzes the cyclization activity that produces IGP and AICAR from PRFAR using the ammonia provided by the HisH subunit. This Bacillus cereus (strain AH820) protein is Imidazole glycerol phosphate synthase subunit HisF.